The following is a 449-amino-acid chain: UDP-N-acetylmuramate--L-alanine ligase (449 aa).

Residue 121 to 127 coordinates ATP; it reads GAHGKSS.

The protein belongs to the MurCDEF family.

The protein resides in the cytoplasm. It carries out the reaction UDP-N-acetyl-alpha-D-muramate + L-alanine + ATP = UDP-N-acetyl-alpha-D-muramoyl-L-alanine + ADP + phosphate + H(+). It functions in the pathway cell wall biogenesis; peptidoglycan biosynthesis. Functionally, cell wall formation. The sequence is that of UDP-N-acetylmuramate--L-alanine ligase from Helicobacter pylori (strain P12).